Here is a 530-residue protein sequence, read N- to C-terminus: Probable ATP-binding protein YbiT (530 aa).

ABC transporter domains follow at residues 2–252 and 320–526; these read LVSS…ERLL and LEVE…YLRS. Residues 34 to 41 and 352 to 359 contribute to the ATP site; these read GANGSGKS and GTNGVGKS.

Belongs to the ABC transporter superfamily. ABCF family. YbiT subfamily.

This chain is Probable ATP-binding protein YbiT (ybiT), found in Escherichia coli O157:H7.